Consider the following 320-residue polypeptide: Phosphatidylserine decarboxylase proenzyme (320 aa).

Catalysis depends on charge relay system; for autoendoproteolytic cleavage activity residues Asp90, His147, and Ser254. The active-site Schiff-base intermediate with substrate; via pyruvic acid; for decarboxylase activity is Ser254. Ser254 is subject to Pyruvic acid (Ser); by autocatalysis. Residues 288-320 are disordered; it reads EASTAAEPAPLPEEEIRAEHRASPLVDDTQDQG.

Belongs to the phosphatidylserine decarboxylase family. PSD-B subfamily. Prokaryotic type I sub-subfamily. As to quaternary structure, heterodimer of a large membrane-associated beta subunit and a small pyruvoyl-containing alpha subunit. Requires pyruvate as cofactor. In terms of processing, is synthesized initially as an inactive proenzyme. Formation of the active enzyme involves a self-maturation process in which the active site pyruvoyl group is generated from an internal serine residue via an autocatalytic post-translational modification. Two non-identical subunits are generated from the proenzyme in this reaction, and the pyruvate is formed at the N-terminus of the alpha chain, which is derived from the carboxyl end of the proenzyme. The autoendoproteolytic cleavage occurs by a canonical serine protease mechanism, in which the side chain hydroxyl group of the serine supplies its oxygen atom to form the C-terminus of the beta chain, while the remainder of the serine residue undergoes an oxidative deamination to produce ammonia and the pyruvoyl prosthetic group on the alpha chain. During this reaction, the Ser that is part of the protease active site of the proenzyme becomes the pyruvoyl prosthetic group, which constitutes an essential element of the active site of the mature decarboxylase.

It is found in the cell membrane. The enzyme catalyses a 1,2-diacyl-sn-glycero-3-phospho-L-serine + H(+) = a 1,2-diacyl-sn-glycero-3-phosphoethanolamine + CO2. It functions in the pathway phospholipid metabolism; phosphatidylethanolamine biosynthesis; phosphatidylethanolamine from CDP-diacylglycerol: step 2/2. In terms of biological role, catalyzes the formation of phosphatidylethanolamine (PtdEtn) from phosphatidylserine (PtdSer). This chain is Phosphatidylserine decarboxylase proenzyme, found in Klebsiella pneumoniae (strain 342).